Here is a 1154-residue protein sequence, read N- to C-terminus: PAN2-PAN3 deadenylation complex catalytic subunit pan2 (1154 aa).

3 WD repeats span residues 20 to 59 (GLPT…RYTS), 102 to 145 (THDE…DKLR), and 276 to 315 (ATVS…HFNE). The tract at residues 316–451 (MSKEVEFADV…GARISGESED (136 aa)) is linker. The USP domain maps to 452-821 (DPLLKYSNVE…SPCVLAFQVR (370 aa)). The 179-residue stretch at 870-1048 (VALDTEFVDL…IEDARMALRL (179 aa)) folds into the Exonuclease domain. Asp-873, Glu-875, Asp-982, and Asp-1041 together coordinate a divalent metal cation. Residues 1092 to 1154 (PGTAVTMQNN…GEFFTGSPLK (63 aa)) form a disordered region. 2 stretches are compositionally biased toward polar residues: residues 1096–1109 (VTMQ…TPST) and 1132–1141 (LTPSNGTFSG).

This sequence belongs to the peptidase C19 family. PAN2 subfamily. As to quaternary structure, forms a heterotrimer with an asymmetric homodimer of the regulatory subunit pan3 to form the poly(A)-nuclease (PAN) deadenylation complex. A divalent metal cation is required as a cofactor.

The protein localises to the cytoplasm. The enzyme catalyses Exonucleolytic cleavage of poly(A) to 5'-AMP.. Positively regulated by the regulatory subunit pan3. Catalytic subunit of the poly(A)-nuclease (PAN) deadenylation complex, one of two cytoplasmic mRNA deadenylases involved in mRNA turnover. PAN specifically shortens poly(A) tails of RNA and the activity is stimulated by poly(A)-binding protein pab1. PAN deadenylation is followed by rapid degradation of the shortened mRNA tails by the CCR4-NOT complex. Deadenylated mRNAs are then degraded by two alternative mechanisms, namely exosome-mediated 3'-5' exonucleolytic degradation, or deadenylation-dependent mRNA decaping and subsequent 5'-3' exonucleolytic degradation by xrn1. May also be involved in post-transcriptional maturation of mRNA poly(A) tails. The sequence is that of PAN2-PAN3 deadenylation complex catalytic subunit pan2 from Emericella nidulans (strain FGSC A4 / ATCC 38163 / CBS 112.46 / NRRL 194 / M139) (Aspergillus nidulans).